The following is a 240-amino-acid chain: 2,3,4,5-tetrahydropyridine-2,6-dicarboxylate N-acetyltransferase (240 aa).

It belongs to the transferase hexapeptide repeat family. DapH subfamily.

It carries out the reaction (S)-2,3,4,5-tetrahydrodipicolinate + acetyl-CoA + H2O = L-2-acetamido-6-oxoheptanedioate + CoA. It functions in the pathway amino-acid biosynthesis; L-lysine biosynthesis via DAP pathway; LL-2,6-diaminopimelate from (S)-tetrahydrodipicolinate (acetylase route): step 1/3. Functionally, catalyzes the transfer of an acetyl group from acetyl-CoA to tetrahydrodipicolinate. This is 2,3,4,5-tetrahydropyridine-2,6-dicarboxylate N-acetyltransferase from Bacillus cytotoxicus (strain DSM 22905 / CIP 110041 / 391-98 / NVH 391-98).